The following is a 525-amino-acid chain: Serine/threonine protein phosphatase 2A 55 kDa regulatory subunit B beta isoform (525 aa).

The tract at residues M1 to R30 is disordered. WD repeat units follow at residues Q48–S87 and E124–I165. Residues N169 to A191 form a disordered region. A compositionally biased stretch (low complexity) spans N171–S189. WD repeat units follow at residues A244–N282, D293–N333, E352–A390, and D495–A525.

Belongs to the phosphatase 2A regulatory subunit B family. In terms of assembly, PP2A consists of a common heteromeric enzyme, composed of a catalytic subunit (subunits C), a constant regulatory subunit (subunit A), and a variety of regulatory subunits such as subunits B (the R2/B/PR55/B55, R3/B''/PR72/PR130/PR59 and R5/B'/B56 families).

In terms of biological role, the B regulatory subunit may modulate substrate selectivity and catalytic activity, and may also direct the localization of the catalytic enzyme to a particular subcellular compartment. The protein is Serine/threonine protein phosphatase 2A 55 kDa regulatory subunit B beta isoform of Oryza sativa subsp. japonica (Rice).